We begin with the raw amino-acid sequence, 307 residues long: tRNA dimethylallyltransferase 1 (307 aa).

Residue 11 to 18 participates in ATP binding; it reads GPTASGKT. 13 to 18 is a binding site for substrate; that stretch reads TASGKT. Interaction with substrate tRNA stretches follow at residues 36-39 and 159-163; these read DSRQ and QRAIR.

Belongs to the IPP transferase family. Monomer. The cofactor is Mg(2+).

The catalysed reaction is adenosine(37) in tRNA + dimethylallyl diphosphate = N(6)-dimethylallyladenosine(37) in tRNA + diphosphate. In terms of biological role, catalyzes the transfer of a dimethylallyl group onto the adenine at position 37 in tRNAs that read codons beginning with uridine, leading to the formation of N6-(dimethylallyl)adenosine (i(6)A). The chain is tRNA dimethylallyltransferase 1 from Parabacteroides distasonis (strain ATCC 8503 / DSM 20701 / CIP 104284 / JCM 5825 / NCTC 11152).